Reading from the N-terminus, the 934-residue chain is Protein translocase subunit SecA (934 aa).

ATP is bound by residues Gln-90, 108–112 (GEGKT), and Asp-509. Positions 535–565 (PEEDHTPPVPLQRSAPGGFSDAAAPSLPRSG) are disordered.

This sequence belongs to the SecA family. Monomer and homodimer. Part of the essential Sec protein translocation apparatus which comprises SecA, SecYEG and auxiliary proteins SecDF. Other proteins may also be involved.

The protein resides in the cell inner membrane. It localises to the cellular thylakoid membrane. Its subcellular location is the cytoplasm. It carries out the reaction ATP + H2O + cellular proteinSide 1 = ADP + phosphate + cellular proteinSide 2.. In terms of biological role, part of the Sec protein translocase complex. Interacts with the SecYEG preprotein conducting channel. Has a central role in coupling the hydrolysis of ATP to the transfer of proteins into and across the cell membrane, serving as an ATP-driven molecular motor driving the stepwise translocation of polypeptide chains across the membrane. Its function is as follows. Probably participates in protein translocation into and across both the cytoplasmic and thylakoid membranes in cyanobacterial cells. In Synechococcus sp. (strain CC9605), this protein is Protein translocase subunit SecA.